The sequence spans 335 residues: DDRGK domain-containing protein 1 (335 aa).

Topologically, residues 1–6 are lumenal; that stretch reads MGDTYS. The helical transmembrane segment at 7 to 27 threads the bilayer; it reads LVLVAGYLSIFLFIGAIGYFY. Residues 28–335 lie on the Cytoplasmic side of the membrane; sequence LSKPRIPSSN…NNDQDPVDTN (308 aa). The tract at residues 37 to 124 is disordered; that stretch reads NVNEQQQQQQ…GEDIGVVAPG (88 aa). 2 stretches are compositionally biased toward low complexity: residues 41–56 and 91–103; these read QQQQQQQQQQQQQQPQ and SSGSDSDNSTNSD. A compositionally biased stretch (acidic residues) spans 104-117; the sequence is NYDDDNGQEGEGED.

Belongs to the DDRGK1 family.

It localises to the endoplasmic reticulum membrane. In terms of biological role, substrate adapter for ufmylation, the covalent attachment of the ubiquitin-like modifier UFM1 to substrate proteins. This Dictyostelium discoideum (Social amoeba) protein is DDRGK domain-containing protein 1.